The sequence spans 76 residues: Small ribosomal subunit protein bS18 (76 aa).

The protein belongs to the bacterial ribosomal protein bS18 family. In terms of assembly, part of the 30S ribosomal subunit. Forms a tight heterodimer with protein bS6.

Functionally, binds as a heterodimer with protein bS6 to the central domain of the 16S rRNA, where it helps stabilize the platform of the 30S subunit. This is Small ribosomal subunit protein bS18 from Xanthomonas campestris pv. campestris (strain 8004).